Consider the following 273-residue polypeptide: Dermonecrotic toxin LruSicTox-alphaIC1c (273 aa).

His5 is an active-site residue. Mg(2+)-binding residues include Glu25 and Asp27. His41 (nucleophile) is an active-site residue. Disulfide bonds link Cys45/Cys51 and Cys47/Cys190. A Mg(2+)-binding site is contributed by Asp85.

It belongs to the arthropod phospholipase D family. Class II subfamily. Mg(2+) is required as a cofactor. In terms of tissue distribution, expressed by the venom gland.

The protein localises to the secreted. The catalysed reaction is an N-(acyl)-sphingosylphosphocholine = an N-(acyl)-sphingosyl-1,3-cyclic phosphate + choline. The enzyme catalyses an N-(acyl)-sphingosylphosphoethanolamine = an N-(acyl)-sphingosyl-1,3-cyclic phosphate + ethanolamine. It catalyses the reaction a 1-acyl-sn-glycero-3-phosphocholine = a 1-acyl-sn-glycero-2,3-cyclic phosphate + choline. It carries out the reaction a 1-acyl-sn-glycero-3-phosphoethanolamine = a 1-acyl-sn-glycero-2,3-cyclic phosphate + ethanolamine. Its function is as follows. Dermonecrotic toxins cleave the phosphodiester linkage between the phosphate and headgroup of certain phospholipids (sphingolipid and lysolipid substrates), forming an alcohol (often choline) and a cyclic phosphate. This toxin acts on sphingomyelin (SM). It may also act on ceramide phosphoethanolamine (CPE), lysophosphatidylcholine (LPC) and lysophosphatidylethanolamine (LPE), but not on lysophosphatidylserine (LPS), and lysophosphatidylglycerol (LPG). It acts by transphosphatidylation, releasing exclusively cyclic phosphate products as second products. Induces dermonecrosis, hemolysis, increased vascular permeability, edema, inflammatory response, and platelet aggregation. The protein is Dermonecrotic toxin LruSicTox-alphaIC1c of Loxosceles rufescens (Mediterranean recluse spider).